The primary structure comprises 393 residues: NAD(P)H-quinone oxidoreductase subunit H, chloroplastic (393 aa).

Belongs to the complex I 49 kDa subunit family. In terms of assembly, NDH is composed of at least 16 different subunits, 5 of which are encoded in the nucleus.

It localises to the plastid. It is found in the chloroplast thylakoid membrane. It catalyses the reaction a plastoquinone + NADH + (n+1) H(+)(in) = a plastoquinol + NAD(+) + n H(+)(out). The catalysed reaction is a plastoquinone + NADPH + (n+1) H(+)(in) = a plastoquinol + NADP(+) + n H(+)(out). In terms of biological role, NDH shuttles electrons from NAD(P)H:plastoquinone, via FMN and iron-sulfur (Fe-S) centers, to quinones in the photosynthetic chain and possibly in a chloroplast respiratory chain. The immediate electron acceptor for the enzyme in this species is believed to be plastoquinone. Couples the redox reaction to proton translocation, and thus conserves the redox energy in a proton gradient. The protein is NAD(P)H-quinone oxidoreductase subunit H, chloroplastic of Lepidium virginicum (Virginia pepperweed).